Reading from the N-terminus, the 179-residue chain is Large ribosomal subunit protein uL5 (179 aa).

It belongs to the universal ribosomal protein uL5 family. In terms of assembly, part of the 50S ribosomal subunit; part of the 5S rRNA/L5/L18/L25 subcomplex. Contacts the 5S rRNA and the P site tRNA. Forms a bridge to the 30S subunit in the 70S ribosome.

This is one of the proteins that bind and probably mediate the attachment of the 5S RNA into the large ribosomal subunit, where it forms part of the central protuberance. In the 70S ribosome it contacts protein S13 of the 30S subunit (bridge B1b), connecting the 2 subunits; this bridge is implicated in subunit movement. Contacts the P site tRNA; the 5S rRNA and some of its associated proteins might help stabilize positioning of ribosome-bound tRNAs. This chain is Large ribosomal subunit protein uL5, found in Francisella tularensis subsp. mediasiatica (strain FSC147).